Reading from the N-terminus, the 1349-residue chain is Serine/threonine-protein kinase GIN4 (1349 aa).

Residues 1 to 20 (MPHSRQPSISSSIMSQSNHN) are compositionally biased toward low complexity. The segment at 1–30 (MPHSRQPSISSSIMSQSNHNHPQKIGPWKL) is disordered. Ser-10, Ser-11, Ser-12, and Ser-15 each carry phosphoserine. Residues 28–288 (WKLGKTLGRG…TEKILRHPLL (261 aa)) form the Protein kinase domain. Residues 34 to 42 (LGRGATGRV) and Lys-57 each bind ATP. Thr-69 is modified (phosphothreonine). Asp-158 (proton acceptor) is an active-site residue. At Thr-191 the chain carries Phosphothreonine. Phosphoserine occurs at positions 294, 300, and 303. 2 disordered regions span residues 366–498 (QEDN…KAKP) and 510–532 (SNFS…YMID). Low complexity predominate over residues 369-384 (NTNNNSPKKSTSFNNK). Phosphoserine occurs at positions 388, 390, and 393. A Phosphothreonine modification is found at Thr-397. Polar residues-rich tracts occupy residues 406-418 (ISVS…QYKS) and 426-442 (ANRN…SANN). 2 positions are modified to phosphoserine: Ser-407 and Ser-409. Thr-412 is modified (phosphothreonine). Position 413 is a phosphoserine (Ser-413). Over residues 443–470 (SPRKSPYKSPYRSPYRSPYKSPSKRYSY) the composition is skewed to low complexity. Phosphoserine occurs at positions 455, 469, 473, 477, and 485. Residues 471–488 (NQSPTKSPYGRRSNSQRQ) are compositionally biased toward polar residues. Ser-556 is subject to Phosphoserine. The span at 570 to 585 (RNSIIGKNNNNSNSNK) shows a compositional bias: low complexity. Positions 570–593 (RNSIIGKNNNNSNSNKRMSKRKSI) are disordered. Ser-634 carries the post-translational modification Phosphoserine. Residues 661–701 (EEKEAKEYERLMELERKKHEAELKARRELEKKKRRQKRRSI) are a coiled coil. Residues 712 to 737 (KNDADPNNSEQELVDEGIKQPKRQSK) are disordered. Ser-720 and Ser-746 each carry phosphoserine. The tract at residues 756–798 (TLEDVENLKRRSASQPVPKRRQTPVLTRRPVSRLDPLWQAHEN) is disordered. A phosphothreonine mark is found at Thr-778, Thr-869, and Thr-876. Phosphoserine is present on Ser-891. Thr-941 carries the phosphothreonine modification. A Phosphoserine modification is found at Ser-973. Thr-990 and Thr-992 each carry phosphothreonine. Residue Ser-999 is modified to Phosphoserine. The disordered stretch occupies residues 1011–1229 (RTSYYDGSGK…AESKEEKPKS (219 aa)). The span at 1024–1040 (RASTTKRYNVHSSSGQR) shows a compositional bias: polar residues. A compositionally biased stretch (basic and acidic residues) spans 1044-1053 (KVPDLPKNDY). Residue Thr-1056 is modified to Phosphothreonine. Phosphoserine is present on residues Ser-1059, Ser-1074, Ser-1077, Ser-1078, Ser-1080, and Ser-1094. A compositionally biased stretch (basic and acidic residues) spans 1083–1094 (VFDKIKLPDGKS). Phosphothreonine is present on Thr-1095. Phosphoserine occurs at positions 1097 and 1098. Position 1106 is a phosphothreonine (Thr-1106). Residues 1134-1149 (IESSQPMSKVRGNNSS) show a composition bias toward polar residues. The residue at position 1154 (Ser-1154) is a Phosphoserine. Residues 1202–1215 (NNTNAATNTTTQQQ) are compositionally biased toward low complexity. Ser-1218 carries the post-translational modification Phosphoserine.

The protein belongs to the protein kinase superfamily. CAMK Ser/Thr protein kinase family. NIM1 subfamily. As to quaternary structure, associates with the septin complex which consists of CDC3, CDC10, CDC11, CDC12, and SEP7. In terms of processing, hyperphosphorylated during mitosis at dozens of sites. Among these, 7 have perfect or minimal CDK consensus sites and are CDC28 targets.

The protein localises to the cytoplasm. It localises to the bud neck. It carries out the reaction L-seryl-[protein] + ATP = O-phospho-L-seryl-[protein] + ADP + H(+). The enzyme catalyses L-threonyl-[protein] + ATP = O-phospho-L-threonyl-[protein] + ADP + H(+). Its function is as follows. Serine/threonine-protein kinase which regulates the localization and the function of the septins during mitosis. Involved in the formation of the septin ring but not the basal septin band. Phosphorylates septins CDC11 and SEP7. Required for the transition from pseudohyphae to hyphae. Acts upstream of IRS4 and INP51 in regulating cell wall integrity responses. Involved in propolis-induced cell death. The chain is Serine/threonine-protein kinase GIN4 (GIN4) from Candida albicans (strain SC5314 / ATCC MYA-2876) (Yeast).